The chain runs to 1523 residues: uncharacterized protein (1523 aa).

The segment at 1 to 89 is disordered; that stretch reads MLPTSSNNEE…GSSNMNPYDR (89 aa). 993–1000 serves as a coordination point for ATP; that stretch reads SPFGCGKS. 2 stretches are compositionally biased toward polar residues: residues 1463–1476 and 1485–1498; these read TSRQ…NEYN and QSNN…SVTN. Residues 1463-1498 form a disordered region; sequence TSRQSKQQRANEYNSQHKHVKRQSNNDYGSQRSVTN.

Belongs to the DNA2/NAM7 helicase family.

This is an uncharacterized protein from Caenorhabditis elegans.